Consider the following 301-residue polypeptide: G-protein coupled receptor homolog U51 (301 aa).

The Extracellular portion of the chain corresponds to Met-1–Glu-15. Residues Phe-16–Val-36 form a helical membrane-spanning segment. Topologically, residues Arg-37–Ala-48 are cytoplasmic. A helical transmembrane segment spans residues Val-49 to Leu-69. The Extracellular segment spans residues Ser-70–Ile-82. A helical transmembrane segment spans residues Leu-83–Ile-103. Residues Glu-104–Ala-122 lie on the Cytoplasmic side of the membrane. The chain crosses the membrane as a helical span at residues Leu-123 to Leu-143. At Asn-144–Asp-168 the chain is on the extracellular side. Residues Met-169–Tyr-189 form a helical membrane-spanning segment. Over Ser-190 to Glu-199 the chain is Cytoplasmic. The chain crosses the membrane as a helical span at residues Leu-200–Pro-220. Residues Lys-221 to Asp-238 are Extracellular-facing. Residues Ile-239–Ala-259 traverse the membrane as a helical segment. The Cytoplasmic segment spans residues Cys-260 to Lys-301.

It belongs to the G-protein coupled receptor 1 family.

Its subcellular location is the host cell membrane. The polypeptide is G-protein coupled receptor homolog U51 (U51) (Homo sapiens (Human)).